Consider the following 288-residue polypeptide: Homoserine kinase (288 aa).

79–89 (PPARGLGSSSA) is a binding site for ATP.

It belongs to the GHMP kinase family. Homoserine kinase subfamily.

The protein resides in the cytoplasm. The catalysed reaction is L-homoserine + ATP = O-phospho-L-homoserine + ADP + H(+). It participates in amino-acid biosynthesis; L-threonine biosynthesis; L-threonine from L-aspartate: step 4/5. Its function is as follows. Catalyzes the ATP-dependent phosphorylation of L-homoserine to L-homoserine phosphate. This is Homoserine kinase from Listeria monocytogenes serotype 4a (strain HCC23).